The chain runs to 197 residues: Protein RESISTANCE TO PHYTOPHTHORA 1, chloroplastic (197 aa).

Residues 1-52 (MSWSLCSTHGVSSSIALTYGFRHRRRSTFRIFATSDGLEPKDDPPESPLPSS) constitute a chloroplast transit peptide. Positions 35 to 56 (SDGLEPKDDPPESPLPSSSSAL) are disordered. The next 4 membrane-spanning stretches (helical) occupy residues 93–113 (FEVQGYASMFLGGVLSFNLLF), 120–140 (LWRLMGMWSIWMFTIPSLRAR), 150–170 (LNYLFLIVPLLNVAIPFFWKS), and 173–193 (LVWSADTVAFFAMYAWKLGWL).

The protein localises to the plastid. Its subcellular location is the chloroplast. It localises to the membrane. Functionally, plays a positive role in the immune response to the oomycetes P.brassicae, including induced oxidative burst (e.g. H(2)O(2)) and enhanced expression of defense-related genes. This is Protein RESISTANCE TO PHYTOPHTHORA 1, chloroplastic from Arabidopsis thaliana (Mouse-ear cress).